Reading from the N-terminus, the 360-residue chain is tRNA (guanine(9)-N1)-methyltransferase (360 aa).

The segment at 1 to 77 (MENQDTEQSQ…RRKERIKEAE (77 aa)) is disordered. 2 stretches are compositionally biased toward basic and acidic residues: residues 8–24 (QSQK…DFKR) and 33–55 (MTKR…DEYK). Residues 56-67 (QKKREKKKAARE) show a composition bias toward basic residues. Positions 68 to 77 (RRKERIKEAE) are enriched in basic and acidic residues. Residues 94-293 (RAKVAPQEQI…EVLPPRKVKG (200 aa)) form the SAM-dependent MTase TRM10-type domain. S-adenosyl-L-methionine contacts are provided by residues 199-200 (LT), G219, 223-227 (DKNRY), C231, L245, and 257-259 (QVL). D223 (proton acceptor) is an active-site residue. A disordered region spans residues 291-360 (VKGKLTHGSD…SDEPSKGADH (70 aa)). Residues 297 to 306 (HGSDPEKSIE) are compositionally biased toward basic and acidic residues. The span at 307–324 (PSEVSEQPVSSEQSEQPV) shows a compositional bias: low complexity. Positions 328 to 343 (QPVSSEQPVLSEQPVL) are enriched in polar residues.

It belongs to the class IV-like SAM-binding methyltransferase superfamily. TRM10 family. As to quaternary structure, monomer.

It is found in the cytoplasm. The protein resides in the nucleus. It carries out the reaction guanosine(9) in tRNA + S-adenosyl-L-methionine = N(1)-methylguanosine(9) in tRNA + S-adenosyl-L-homocysteine + H(+). In terms of biological role, S-adenosyl-L-methionine-dependent guanine N(1)-methyltransferase that catalyzes the formation of N(1)-methylguanine at position 9 (m1G9) in cytoplasmic tRNA. This chain is tRNA (guanine(9)-N1)-methyltransferase, found in Debaryomyces hansenii (strain ATCC 36239 / CBS 767 / BCRC 21394 / JCM 1990 / NBRC 0083 / IGC 2968) (Yeast).